The sequence spans 128 residues: Large ribosomal subunit protein bL17 (128 aa).

Belongs to the bacterial ribosomal protein bL17 family. As to quaternary structure, part of the 50S ribosomal subunit. Contacts protein L32.

In Proteus mirabilis (strain HI4320), this protein is Large ribosomal subunit protein bL17.